Reading from the N-terminus, the 620-residue chain is Nuclear cap-binding protein subunit 3 (620 aa).

Residue K12 forms a Glycyl lysine isopeptide (Lys-Gly) (interchain with G-Cter in SUMO2) linkage. Low complexity predominate over residues 15–28 (APAGPALGLPSPEA). The interval 15-42 (APAGPALGLPSPEAESGVDRGEPEPMEV) is disordered. The residue at position 25 (S25) is a Phosphoserine. Residue K70 forms a Glycyl lysine isopeptide (Lys-Gly) (interchain with G-Cter in SUMO2) linkage. S73 bears the Phosphoserine mark. An RNA recognition motif (RRM) domain region spans residues 126-187 (ETIYICGVDE…MSSLPAQDKI (62 aa)). The short motif at 155–158 (WLDD) is the WLDD motif; essential for 7-methylguanosine-containing mRNA cap binding element. Residues 185–198 (DKIRSRDASEDKSA) are compositionally biased toward basic and acidic residues. 3 disordered regions span residues 185–233 (DKIR…LDTL), 332–419 (HSGL…PKKS), and 436–620 (IRNS…EAES). Residue K186 forms a Glycyl lysine isopeptide (Lys-Gly) (interchain with G-Cter in SUMO2) linkage. Phosphoserine occurs at positions 209 and 210. Acidic residues-rich tracts occupy residues 209 to 230 (SSDD…DVEL) and 341 to 365 (EPIE…DMDA). Residues 366 to 388 (DDRVVVEYHEELPALKQPRERSA) show a composition bias toward basic and acidic residues. T413 carries the phosphothreonine modification. The residue at position 415 (S415) is a Phosphoserine. Composition is skewed to basic and acidic residues over residues 459-474 (PPEK…DEKR) and 511-521 (VRREPSSDVHS). A Glycyl lysine isopeptide (Lys-Gly) (interchain with G-Cter in SUMO2) cross-link involves residue K541. 2 stretches are compositionally biased toward basic and acidic residues: residues 554 to 569 (KTKE…RAPG) and 585 to 598 (IKEK…KSRL). Residues 611–620 (ESSSGSEAES) show a composition bias toward low complexity. Position 620 is a phosphoserine (S620).

It belongs to the NCBP3 family. Component of an alternative cap-binding complex (CBC) composed of NCBP1/CBP80 and NCBP3. Interacts with SRRT, KPNA3, THOC5 and EIF4A3.

The protein localises to the nucleus. It is found in the cytoplasm. Functionally, associates with NCBP1/CBP80 to form an alternative cap-binding complex (CBC) which plays a key role in mRNA export. NCBP3 serves as adapter protein linking the capped RNAs (m7GpppG-capped RNA) to NCBP1/CBP80. Unlike the conventional CBC with NCBP2 which binds both small nuclear RNA (snRNA) and messenger (mRNA) and is involved in their export from the nucleus, the alternative CBC with NCBP3 does not bind snRNA and associates only with mRNA thereby playing a role in only mRNA export. The alternative CBC is particularly important in cellular stress situations such as virus infections and the NCBP3 activity is critical to inhibit virus growth. The chain is Nuclear cap-binding protein subunit 3 from Homo sapiens (Human).